A 1212-amino-acid chain; its full sequence is DNA-directed RNA polymerase subunit beta' (1212 aa).

Residues Cys60, Cys62, Cys75, and Cys78 each coordinate Zn(2+). Mg(2+) contacts are provided by Asp450, Asp452, and Asp454. Positions 819, 893, 900, and 903 each coordinate Zn(2+).

This sequence belongs to the RNA polymerase beta' chain family. In terms of assembly, the RNAP catalytic core consists of 2 alpha, 1 beta, 1 beta' and 1 omega subunit. When a sigma factor is associated with the core the holoenzyme is formed, which can initiate transcription. Mg(2+) is required as a cofactor. Requires Zn(2+) as cofactor.

It catalyses the reaction RNA(n) + a ribonucleoside 5'-triphosphate = RNA(n+1) + diphosphate. DNA-dependent RNA polymerase catalyzes the transcription of DNA into RNA using the four ribonucleoside triphosphates as substrates. The chain is DNA-directed RNA polymerase subunit beta' from Streptococcus thermophilus (strain CNRZ 1066).